Consider the following 416-residue polypeptide: Transmembrane protease serine 11B-like protein (416 aa).

Residues 1–15 (MYRPVIASRKSIPPW) are Cytoplasmic-facing. A helical; Signal-anchor for type II membrane protein membrane pass occupies residues 16–36 (LIILCVLGVLAALGIIIGLLV). Residues 37-416 (HFLAVENKIY…RNWIASKTGI (380 aa)) are Extracellular-facing. One can recognise an SEA domain in the interval 44–161 (KIYYYQGGFK…GSLKLTEISK (118 aa)). A glycan (N-linked (GlcNAc...) asparagine) is linked at Asn-107. Positions 185–415 (ITGGSTAHKG…YRNWIASKTG (231 aa)) constitute a Peptidase S1 domain. An intrachain disulfide couples Cys-210 to Cys-226. His-225 functions as the Charge relay system in the catalytic mechanism. The N-linked (GlcNAc...) asparagine glycan is linked to Asn-235. Residue Asp-270 is the Charge relay system of the active site. 2 disulfide bridges follow: Cys-335–Cys-351 and Cys-362–Cys-391. Ser-366 (charge relay system) is an active-site residue.

It belongs to the peptidase S1 family. As to expression, expressed in esophagus, cervix, tongue, and testes.

Its subcellular location is the cell membrane. Inhibited by aprotinin, leupeptin, benzamidine, SERPINA1, SPINT1 and SPINT2. In terms of biological role, serine protease. The chain is Transmembrane protease serine 11B-like protein (Tmprss11b) from Mus musculus (Mouse).